A 364-amino-acid polypeptide reads, in one-letter code: Peroxisome biogenesis protein 3-2 (364 aa).

A helical membrane pass occupies residues 15–32 (VLVTAGCLGSGYLLYKLY). Positions 33 to 62 (NSHTRRLADLERELAHERENDEIIKTQMKA) form a coiled coil.

Belongs to the peroxin-3 family.

It is found in the peroxisome membrane. Functionally, involved in morphology determination of peroxisomes, but not in import of peroxisomal matrix proteins. May act as a docking factor for PEX19 and be necessary for the import of peroxisomal membrane proteins in the peroxisomes. This chain is Peroxisome biogenesis protein 3-2 (PEX3-2), found in Arabidopsis thaliana (Mouse-ear cress).